The sequence spans 148 residues: Flagellar assembly factor FliW (148 aa).

This sequence belongs to the FliW family. As to quaternary structure, interacts with translational regulator CsrA and flagellin(s).

The protein localises to the cytoplasm. In terms of biological role, acts as an anti-CsrA protein, binds CsrA and prevents it from repressing translation of its target genes, one of which is flagellin. Binds to flagellin and participates in the assembly of the flagellum. This chain is Flagellar assembly factor FliW, found in Ruminiclostridium cellulolyticum (strain ATCC 35319 / DSM 5812 / JCM 6584 / H10) (Clostridium cellulolyticum).